Here is a 53-residue protein sequence, read N- to C-terminus: UPF0391 membrane protein Meso_3392 (53 aa).

The next 2 helical transmembrane spans lie at Trp4–Ala24 and Ile33–Ala53.

Belongs to the UPF0391 family.

The protein resides in the cell membrane. The protein is UPF0391 membrane protein Meso_3392 of Chelativorans sp. (strain BNC1).